The chain runs to 278 residues: Large ribosomal subunit protein uL2 (278 aa).

Over residues 212-221 (NRWLGKRPHN) the composition is skewed to basic residues. The tract at residues 212-278 (NRWLGKRPHN…ILSSRHNRKK (67 aa)) is disordered.

It belongs to the universal ribosomal protein uL2 family. As to quaternary structure, part of the 50S ribosomal subunit. Forms a bridge to the 30S subunit in the 70S ribosome.

One of the primary rRNA binding proteins. Required for association of the 30S and 50S subunits to form the 70S ribosome, for tRNA binding and peptide bond formation. It has been suggested to have peptidyltransferase activity; this is somewhat controversial. Makes several contacts with the 16S rRNA in the 70S ribosome. This chain is Large ribosomal subunit protein uL2, found in Methylorubrum populi (strain ATCC BAA-705 / NCIMB 13946 / BJ001) (Methylobacterium populi).